The following is a 554-amino-acid chain: Dihydroxy-acid dehydratase (554 aa).

Aspartate 78 provides a ligand contact to Mg(2+). Cysteine 119 provides a ligand contact to [2Fe-2S] cluster. Mg(2+) contacts are provided by aspartate 120 and lysine 121. Lysine 121 is subject to N6-carboxylysine. Cysteine 191 serves as a coordination point for [2Fe-2S] cluster. Glutamate 442 is a Mg(2+) binding site. Serine 468 (proton acceptor) is an active-site residue.

Belongs to the IlvD/Edd family. In terms of assembly, homodimer. Requires [2Fe-2S] cluster as cofactor. Mg(2+) is required as a cofactor.

It carries out the reaction (2R)-2,3-dihydroxy-3-methylbutanoate = 3-methyl-2-oxobutanoate + H2O. It catalyses the reaction (2R,3R)-2,3-dihydroxy-3-methylpentanoate = (S)-3-methyl-2-oxopentanoate + H2O. Its pathway is amino-acid biosynthesis; L-isoleucine biosynthesis; L-isoleucine from 2-oxobutanoate: step 3/4. It participates in amino-acid biosynthesis; L-valine biosynthesis; L-valine from pyruvate: step 3/4. Its function is as follows. Functions in the biosynthesis of branched-chain amino acids. Catalyzes the dehydration of (2R,3R)-2,3-dihydroxy-3-methylpentanoate (2,3-dihydroxy-3-methylvalerate) into 2-oxo-3-methylpentanoate (2-oxo-3-methylvalerate) and of (2R)-2,3-dihydroxy-3-methylbutanoate (2,3-dihydroxyisovalerate) into 2-oxo-3-methylbutanoate (2-oxoisovalerate), the penultimate precursor to L-isoleucine and L-valine, respectively. The sequence is that of Dihydroxy-acid dehydratase from Thermotoga petrophila (strain ATCC BAA-488 / DSM 13995 / JCM 10881 / RKU-1).